Consider the following 1352-residue polypeptide: Alpha-protein kinase 1 (1352 aa).

One can recognise an Arf-GAP domain in the interval 7–127 (DPNYGLLRSL…RWTSSLSTSD (121 aa)). A C4-type zinc finger spans residues 25–48 (CAECNSANVPYVCIKLGVFICPTC). 6 disordered regions span residues 123 to 164 (LSTS…NNNN), 219 to 380 (TQSQ…PQHH), 424 to 445 (QQQQ…NSEP), 457 to 484 (HNHH…GNNS), 503 to 560 (FVEE…GGVS), and 619 to 658 (IINN…TNQN). A compositionally biased stretch (polar residues) spans 237 to 246 (GFSPFNSPRS). Low complexity-rich tracts occupy residues 268-287 (NNSN…NNGN) and 298-318 (NNNN…NNNN). Polar residues-rich tracts occupy residues 329–352 (KTFS…SGNS) and 359–379 (HPTQ…SPQH). A coiled-coil region spans residues 393 to 429 (TTQQQLQQQQLQLQQQLQQQLQQQQQQQQQQQQQQQS). 2 stretches are compositionally biased toward basic residues: residues 458 to 470 (NHHH…HHKQ) and 510 to 523 (HQHP…RHHS). Positions 619–636 (IINNQNNQNNNNNNNTNN) are enriched in low complexity. Residues 689–781 (YIQQQQQQQQ…QQQQQQHINL (93 aa)) adopt a coiled-coil conformation. 2 disordered regions span residues 786-863 (PLQS…TDED) and 901-979 (TSPI…PDAR). Polar residues predominate over residues 799–812 (PQHSSSQYMNQQGY). Over residues 821-859 (QPQSPQQIQPQPLQQQIFQQVQQQQPQIPQQSPQPLQSS) the composition is skewed to low complexity. Residues 906 to 915 (QQPPQPPQPV) are compositionally biased toward pro residues. The segment covering 931 to 965 (QQQNGPTVPQQQQQQQQQQQQQQQQQQQQQQQQQP) has biased composition (low complexity). The region spanning 990 to 1194 (RFDAKLGKWV…ICHYLGLSSV (205 aa)) is the Alpha-type protein kinase domain. An ATP-binding site is contributed by 1164–1169 (GKGNLG). 2 disordered regions span residues 1198–1234 (PAND…SFNF) and 1279–1352 (QQQQ…KLVS). Residues 1241-1320 (HVLEQLNQQQ…QQQQQQQQNG (80 aa)) are a coiled coil. Residues 1279 to 1319 (QQQQQQQQQQQQQQQQNQQQNQQQNQQQQQQQQQQQQQQQN) are compositionally biased toward low complexity. Pro residues predominate over residues 1321-1332 (HPPPQTPLPPTP). Basic and acidic residues predominate over residues 1334–1352 (QKDKPKIEVFGDILRKLVS).

This sequence belongs to the protein kinase superfamily. Alpha-type protein kinase family. ALPK subfamily.

The chain is Alpha-protein kinase 1 (ak1) from Dictyostelium discoideum (Social amoeba).